A 253-amino-acid chain; its full sequence is MQKLIMGNWKMNGNSTSIKELCSGISQAQYDTSRVAIAVFPSSVYVKEVISQLPEKVGVGLQNITFYDDGAYTGEISARMLEDIGCDYLLIGHSERRSLFAESDEDVFKKLNKIIDTTITPVVCIGESLDDRQSGKLKQVLATQLSLILENLSVEQLAKVVIAYEPVWAIGTGVVASLDQIQETHQFIRSLLAKVDERLAKNIKIVYGGSLKAENAKDILSLPDVDGGLIGGASLKAAEFNEIINQANKICTE.

Asn8 to Lys10 contacts substrate. The active-site Electrophile is the His93. Glu165 (proton acceptor) is an active-site residue. Substrate is bound by residues Gly171, Ser210, and Gly231–Gly232.

It belongs to the triosephosphate isomerase family. Homodimer.

It localises to the cytoplasm. The catalysed reaction is D-glyceraldehyde 3-phosphate = dihydroxyacetone phosphate. The protein operates within carbohydrate biosynthesis; gluconeogenesis. It participates in carbohydrate degradation; glycolysis; D-glyceraldehyde 3-phosphate from glycerone phosphate: step 1/1. Involved in the gluconeogenesis. Catalyzes stereospecifically the conversion of dihydroxyacetone phosphate (DHAP) to D-glyceraldehyde-3-phosphate (G3P). This is Triosephosphate isomerase from Francisella tularensis subsp. novicida (strain U112).